Consider the following 438-residue polypeptide: Probable trafficking protein particle complex subunit 13 homolog (438 aa).

Belongs to the TRAPPC13 family.

The protein is Probable trafficking protein particle complex subunit 13 homolog of Drosophila melanogaster (Fruit fly).